Reading from the N-terminus, the 767-residue chain is MKTPWKVLLGLLGVAALVTIITVPVVLLNKDEAAADSRRTYTLADYLKNTFRVKSYSLRWVSDSEYLYKQENNILLFNAEHGNSSIFLENSTFEIFGDSISDYSVSPDRLFVLLEYNYVKQWRHSYTASYSIYDLNKRQLITEEKIPNNTQWITWSQEGHKLAYVWKNDIYVKIEPHLPSHRITSTGKENVIFNGINDWVYEEEIFGAYSALWWSPNGTFLAYAQFNDTGVPLIEYSFYSDESLQYPKTVWIPYPKAGAVNPTVKFFIVNTDSLSSTTTTIPMQITAPASVTTGDHYLCDVAWVSEDRISLQWLRRIQNYSVMAICDYDKTTLVWNCPTTQEHIETSATGWCGRFRPAEPHFTSDGSSFYKIVSDKDGYKHICQFQKDRKPEQVCTFITKGAWEVISIEALTSDYLYYISNEYKEMPGGRNLYKIQLTDHTNKKCLSCDLNPERCQYYSVSLSKEAKYYQLGCRGPGLPLYTLHRSTDQKELRVLEDNSALDKMLQDVQMPSKKLDFIVLNETRFWYQMILPPHFDKSKKYPLLIDVYAGPCSQKADAAFRLNWATYLASTENIIVASFDGRGSGYQGDKIMHAINKRLGTLEVEDQIEAARQFLKMGFVDSKRVAIWGWSYGGYVTSMVLGSGSGVFKCGIAVAPVSRWEYYDSVYTERYMGLPTPEDNLDHYRNSTVMSRAENFKQVEYLLIHGTADDNVHFQQSAQISKALVDAGVDFQAMWYTDEDHGIASSTAHQHIYSHMSHFLQQCFSLR.

Residues 1-6 (MKTPWK) lie on the Cytoplasmic side of the membrane. A helical; Signal-anchor for type II membrane protein transmembrane segment spans residues 7–28 (VLLGLLGVAALVTIITVPVVLL). At 29 to 767 (NKDEAAADSR…HFLQQCFSLR (739 aa)) the chain is on the extracellular side. N-linked (GlcNAc...) asparagine glycosylation is found at Asn83, Asn90, Asn148, Asn217, Asn227, and Asn319. 4 disulfides stabilise this stretch: Cys326-Cys337, Cys383-Cys395, Cys445-Cys448, and Cys455-Cys473. Asn521 carries N-linked (GlcNAc...) asparagine glycosylation. Ser631 (charge relay system) is an active-site residue. A disulfide bridge links Cys650 with Cys763. A glycan (N-linked (GlcNAc...) asparagine) is linked at Asn686. Active-site charge relay system residues include Asp709 and His741.

It belongs to the peptidase S9B family. DPPIV subfamily. As to quaternary structure, monomer. Homodimer. Heterodimer with Seprase (FAP). Requires homodimerization for optimal dipeptidyl peptidase activity and T-cell costimulation. Found in a membrane raft complex, at least composed of BCL10, CARD11, DPP4 and IKBKB. Associates with collagen. Interacts with PTPRC; the interaction is enhanced in an interleukin-12-dependent manner in activated lymphocytes. Interacts (via extracellular domain) with ADA; does not inhibit its dipeptidyl peptidase activity. Interacts with CAV1 (via the N-terminus); the interaction is direct. Interacts (via cytoplasmic tail) with CARD11 (via PDZ domain); its homodimerization is necessary for interaction with CARD11. Interacts with IGF2R; the interaction is direct. Interacts with GPC3. In terms of processing, the soluble form (Dipeptidyl peptidase 4 soluble form also named SDPP) derives from the membrane form (Dipeptidyl peptidase 4 membrane form also named MDPP) by proteolytic processing. N- and O-Glycosylated. Post-translationally, phosphorylated. Mannose 6-phosphate residues in the carbohydrate moiety are necessary for interaction with IGF2R in activated T-cells. Mannose 6-phosphorylation is induced during T-cell activation. Expressed in bile ducts and other epithelial brush borders (small intestine, kidney, colon, pancreatic duct); acinar structures in salivary glands; endothelial structures and T cell areas in thymus, spleen and lymph node.

It is found in the secreted. It localises to the cell membrane. The protein localises to the apical cell membrane. The protein resides in the cell projection. Its subcellular location is the invadopodium membrane. It is found in the lamellipodium membrane. It localises to the cell junction. The protein localises to the membrane raft. It catalyses the reaction Release of an N-terminal dipeptide, Xaa-Yaa-|-Zaa-, from a polypeptide, preferentially when Yaa is Pro, provided Zaa is neither Pro nor hydroxyproline.. With respect to regulation, inhibited by GPC3 and diprotin A. Cell surface glycoprotein receptor involved in the costimulatory signal essential for T-cell receptor (TCR)-mediated T-cell activation. Acts as a positive regulator of T-cell coactivation, by binding at least ADA, CAV1, IGF2R, and PTPRC. Its binding to CAV1 and CARD11 induces T-cell proliferation and NF-kappa-B activation in a T-cell receptor/CD3-dependent manner. Its interaction with ADA also regulates lymphocyte-epithelial cell adhesion. In association with FAP is involved in the pericellular proteolysis of the extracellular matrix (ECM), the migration and invasion of endothelial cells into the ECM. May be involved in the promotion of lymphatic endothelial cells adhesion, migration and tube formation. When overexpressed, enhanced cell proliferation, a process inhibited by GPC3. Also acts as a serine exopeptidase with a dipeptidyl peptidase activity that regulates various physiological processes by cleaving peptides in the circulation, including many chemokines, mitogenic growth factors, neuropeptides and peptide hormones. Removes N-terminal dipeptides sequentially from polypeptides having unsubstituted N-termini provided that the penultimate residue is proline. This chain is Dipeptidyl peptidase 4 (Dpp4), found in Rattus norvegicus (Rat).